A 186-amino-acid chain; its full sequence is Translation initiation factor IF-3 (186 aa).

It belongs to the IF-3 family. In terms of assembly, monomer.

The protein resides in the cytoplasm. Its function is as follows. IF-3 binds to the 30S ribosomal subunit and shifts the equilibrium between 70S ribosomes and their 50S and 30S subunits in favor of the free subunits, thus enhancing the availability of 30S subunits on which protein synthesis initiation begins. The chain is Translation initiation factor IF-3 from Chlamydia muridarum (strain MoPn / Nigg).